The chain runs to 188 residues: Pyridoxal 5'-phosphate synthase subunit PdxT (188 aa).

Gly46 to Ser48 contacts L-glutamine. The Nucleophile role is filled by Cys78. L-glutamine contacts are provided by residues Arg105 and Ile134 to Arg135. Active-site charge relay system residues include His170 and Glu172.

This sequence belongs to the glutaminase PdxT/SNO family. In terms of assembly, in the presence of PdxS, forms a dodecamer of heterodimers. Only shows activity in the heterodimer.

The enzyme catalyses aldehydo-D-ribose 5-phosphate + D-glyceraldehyde 3-phosphate + L-glutamine = pyridoxal 5'-phosphate + L-glutamate + phosphate + 3 H2O + H(+). The catalysed reaction is L-glutamine + H2O = L-glutamate + NH4(+). Its pathway is cofactor biosynthesis; pyridoxal 5'-phosphate biosynthesis. Functionally, catalyzes the hydrolysis of glutamine to glutamate and ammonia as part of the biosynthesis of pyridoxal 5'-phosphate. The resulting ammonia molecule is channeled to the active site of PdxS. This Clostridium kluyveri (strain ATCC 8527 / DSM 555 / NBRC 12016 / NCIMB 10680 / K1) protein is Pyridoxal 5'-phosphate synthase subunit PdxT.